A 274-amino-acid polypeptide reads, in one-letter code: Ethanolamine ammonia-lyase small subunit (274 aa).

Adenosylcob(III)alamin contacts are provided by V161, E182, and C211.

The protein belongs to the EutC family. As to quaternary structure, the basic unit is a heterodimer which dimerizes to form tetramers. The heterotetramers trimerize; 6 large subunits form a core ring with 6 small subunits projecting outwards. The cofactor is adenosylcob(III)alamin.

It is found in the bacterial microcompartment. The enzyme catalyses ethanolamine = acetaldehyde + NH4(+). It functions in the pathway amine and polyamine degradation; ethanolamine degradation. In terms of biological role, catalyzes the deamination of various vicinal amino-alcohols to oxo compounds. Allows this organism to utilize ethanolamine as the sole source of nitrogen and carbon in the presence of external vitamin B12. This chain is Ethanolamine ammonia-lyase small subunit, found in Pseudomonas fluorescens (strain Pf0-1).